Reading from the N-terminus, the 176-residue chain is Large ribosomal subunit protein uL10 (176 aa).

The protein belongs to the universal ribosomal protein uL10 family. In terms of assembly, part of the ribosomal stalk of the 50S ribosomal subunit. The N-terminus interacts with L11 and the large rRNA to form the base of the stalk. The C-terminus forms an elongated spine to which L12 dimers bind in a sequential fashion forming a multimeric L10(L12)X complex.

Its function is as follows. Forms part of the ribosomal stalk, playing a central role in the interaction of the ribosome with GTP-bound translation factors. This chain is Large ribosomal subunit protein uL10 (rplJ), found in Streptomyces coelicolor (strain ATCC BAA-471 / A3(2) / M145).